Consider the following 202-residue polypeptide: MGANSSSPAGLTPSSLPDDAIEVGRILDAWGVKGWVKILPHSTDPEALFSAKSWFLQAPEAKFRPGFNAFSGTVLLSVDEAKTHSDTVVAKFSGQDDRNAAEALRGARIFLPRSSFPVASKDEYYWVDLIGLNVVNREGVPLGQVRDLMTTGPHSVLCVEYTAQQEDGTAVTAERMIPFVSAYIDTVDIAGKCITVDWQPDY.

The 82-residue stretch at Lys121–Tyr202 folds into the PRC barrel domain.

It belongs to the RimM family. Binds ribosomal protein uS19.

It localises to the cytoplasm. In terms of biological role, an accessory protein needed during the final step in the assembly of 30S ribosomal subunit, possibly for assembly of the head region. Essential for efficient processing of 16S rRNA. May be needed both before and after RbfA during the maturation of 16S rRNA. It has affinity for free ribosomal 30S subunits but not for 70S ribosomes. This Polaromonas sp. (strain JS666 / ATCC BAA-500) protein is Ribosome maturation factor RimM.